The sequence spans 319 residues: Tetrahydromethanopterin S-methyltransferase subunit H (319 aa).

It belongs to the MtrH family. The complex is composed of 8 subunits; MtrA, MtrB, MtrC, MtrD, MtrE, MtrF, MtrG and MtrH.

It catalyses the reaction 5-methyl-5,6,7,8-tetrahydromethanopterin + coenzyme M + 2 Na(+)(in) = 5,6,7,8-tetrahydromethanopterin + methyl-coenzyme M + 2 Na(+)(out). The protein operates within one-carbon metabolism; methanogenesis from CO(2); methyl-coenzyme M from 5,10-methylene-5,6,7,8-tetrahydromethanopterin: step 2/2. Functionally, part of a complex that catalyzes the formation of methyl-coenzyme M and tetrahydromethanopterin from coenzyme M and methyl-tetrahydromethanopterin. This is an energy-conserving, sodium-ion translocating step. MtrH catalyzes the transfer of the methyl group from methyl-tetrahydromethanopterin to the corrinoid prosthetic group of MtrA. The protein is Tetrahydromethanopterin S-methyltransferase subunit H of Methanocaldococcus jannaschii (strain ATCC 43067 / DSM 2661 / JAL-1 / JCM 10045 / NBRC 100440) (Methanococcus jannaschii).